Here is a 512-residue protein sequence, read N- to C-terminus: UDP-N-acetylmuramate--L-alanine ligase (512 aa).

132–138 contributes to the ATP binding site; sequence GAHGKTT.

It belongs to the MurCDEF family.

It is found in the cytoplasm. It catalyses the reaction UDP-N-acetyl-alpha-D-muramate + L-alanine + ATP = UDP-N-acetyl-alpha-D-muramoyl-L-alanine + ADP + phosphate + H(+). It participates in cell wall biogenesis; peptidoglycan biosynthesis. Cell wall formation. This chain is UDP-N-acetylmuramate--L-alanine ligase, found in Bifidobacterium longum (strain NCC 2705).